Here is a 180-residue protein sequence, read N- to C-terminus: Mitochondrial membrane protein FMP33 (180 aa).

3 consecutive transmembrane segments (helical) span residues 34–54 (LYTSLLVTTLYGTGLACLYLE), 121–141 (FSIVWGFLIQLSSLIGNSTLG), and 145–165 (ILYKGSVVSVLGFPPLIYMAL).

The protein resides in the mitochondrion membrane. The protein is Mitochondrial membrane protein FMP33 (FMP33) of Saccharomyces cerevisiae (strain ATCC 204508 / S288c) (Baker's yeast).